The following is an 85-amino-acid chain: Probable Sec-independent protein translocase protein TatE (85 aa).

Residues 1 to 21 (MEGLSITKLLVVGILIVLLFG) traverse the membrane as a helical segment. The disordered stretch occupies residues 64-85 (KTVAETKAASDSQAAASVERKD).

The protein belongs to the TatA/E family. TatE subfamily.

It localises to the cell inner membrane. Functionally, part of the twin-arginine translocation (Tat) system that transports large folded proteins containing a characteristic twin-arginine motif in their signal peptide across membranes. TatE shares overlapping functions with TatA. The sequence is that of Probable Sec-independent protein translocase protein TatE from Yersinia pestis.